The chain runs to 56 residues: Small ribosomal subunit protein bS21 (56 aa).

The protein belongs to the bacterial ribosomal protein bS21 family.

This Synechococcus sp. (strain RCC307) protein is Small ribosomal subunit protein bS21.